The following is a 405-amino-acid chain: Tryptophan synthase beta chain (405 aa).

K98 is modified (N6-(pyridoxal phosphate)lysine).

The protein belongs to the TrpB family. In terms of assembly, tetramer of two alpha and two beta chains. Pyridoxal 5'-phosphate is required as a cofactor.

The catalysed reaction is (1S,2R)-1-C-(indol-3-yl)glycerol 3-phosphate + L-serine = D-glyceraldehyde 3-phosphate + L-tryptophan + H2O. The protein operates within amino-acid biosynthesis; L-tryptophan biosynthesis; L-tryptophan from chorismate: step 5/5. The beta subunit is responsible for the synthesis of L-tryptophan from indole and L-serine. This chain is Tryptophan synthase beta chain, found in Methylococcus capsulatus (strain ATCC 33009 / NCIMB 11132 / Bath).